We begin with the raw amino-acid sequence, 293 residues long: ADP-forming sulfoacetate-CoA ligase subunit SauD (293 aa).

Residues 17-20 (TGKE), lysine 43, and 96-98 (IAD) each bind CoA. Histidine 251 serves as the catalytic Tele-phosphohistidine intermediate.

The protein belongs to the succinate/malate CoA ligase alpha subunit family. Forms a complex with SauC.

The catalysed reaction is sulfoacetate + ATP + CoA = sulfoacetyl-CoA + ADP + phosphate. Functionally, involved in the degradation of sulfoacetate. Catalyzes the CoA- and ATP-dependent conversion of sulfoacetate to sulfoacetyl-CoA and ADP. Cannot use other sulfonic and carboxylic acids, and shows only residual activity with 3-sulfopropanoate and malonic acid. This is ADP-forming sulfoacetate-CoA ligase subunit SauD from Bilophila wadsworthia (strain 3_1_6).